A 702-amino-acid chain; its full sequence is Ribosomal RNA large subunit methyltransferase K/L (702 aa).

The region spanning 43–154 is the THUMP domain; the sequence is LVYQSLMWSR…KETASIALDL (112 aa).

Belongs to the methyltransferase superfamily. RlmKL family.

It is found in the cytoplasm. The enzyme catalyses guanosine(2445) in 23S rRNA + S-adenosyl-L-methionine = N(2)-methylguanosine(2445) in 23S rRNA + S-adenosyl-L-homocysteine + H(+). It catalyses the reaction guanosine(2069) in 23S rRNA + S-adenosyl-L-methionine = N(2)-methylguanosine(2069) in 23S rRNA + S-adenosyl-L-homocysteine + H(+). Its function is as follows. Specifically methylates the guanine in position 2445 (m2G2445) and the guanine in position 2069 (m7G2069) of 23S rRNA. The polypeptide is Ribosomal RNA large subunit methyltransferase K/L (Escherichia coli (strain K12 / DH10B)).